The sequence spans 99 residues: Acylphosphatase (99 aa).

In terms of domain architecture, Acylphosphatase-like spans 5 to 97; sequence VRQIVIRGRV…RPGERFSQLP (93 aa). Active-site residues include arginine 20 and asparagine 38.

The protein belongs to the acylphosphatase family.

The enzyme catalyses an acyl phosphate + H2O = a carboxylate + phosphate + H(+). This chain is Acylphosphatase (acyP), found in Nitrobacter hamburgensis (strain DSM 10229 / NCIMB 13809 / X14).